Consider the following 237-residue polypeptide: Sugar fermentation stimulation protein homolog (237 aa).

Belongs to the SfsA family.

The protein is Sugar fermentation stimulation protein homolog of Pseudomonas syringae pv. syringae (strain B728a).